The primary structure comprises 132 residues: Large ribosomal subunit protein bL17 (132 aa).

The protein belongs to the bacterial ribosomal protein bL17 family. As to quaternary structure, part of the 50S ribosomal subunit. Contacts protein L32.

The sequence is that of Large ribosomal subunit protein bL17 from Anaplasma phagocytophilum (strain HZ).